Here is a 92-residue protein sequence, read N- to C-terminus: Small ribosomal subunit protein uS19c (92 aa).

This sequence belongs to the universal ribosomal protein uS19 family.

It is found in the plastid. The protein localises to the chloroplast. In terms of biological role, protein S19 forms a complex with S13 that binds strongly to the 16S ribosomal RNA. This chain is Small ribosomal subunit protein uS19c, found in Acorus calamus (Sweet flag).